A 360-amino-acid polypeptide reads, in one-letter code: Magnesium transporter NIPA2 (360 aa).

Residues 1–9 (MSQGHGKYD) lie on the Extracellular side of the membrane. The helical transmembrane segment at 10–30 (FYIGLGLAMSSSIFIGGSFIL) threads the bilayer. Topologically, residues 31-56 (KKKGLLRLARKGSTRAGQGGHAYLKE) are cytoplasmic. Residues 57–77 (WLWWAGLLSMGAGEVANFAAY) form a helical membrane-spanning segment. Residue Ala78 is a topological domain, extracellular. Residues 79–99 (FAPATLVTPLGALSVLVSAIL) traverse the membrane as a helical segment. Over 100-107 (SSYFLNER) the chain is Cytoplasmic. A helical transmembrane segment spans residues 108 to 128 (LNLHGKIGCLLSILGSTVMVI). The Extracellular segment spans residues 129 to 149 (HAPKEEEIETLNEMSHKLGDP). A helical transmembrane segment spans residues 150–170 (GFVVFATLVVIVSLILIFVVG). The Cytoplasmic segment spans residues 171 to 175 (PRHGQ). The chain crosses the membrane as a helical span at residues 176–196 (TNILVYITICSVIGAVSVSCA). At 197-215 (KGLGIAIKELFAGKPVLQH) the chain is on the extracellular side. The chain crosses the membrane as a helical span at residues 216 to 236 (PLTWILLLSLIVCVSTQINYL). The Cytoplasmic segment spans residues 237 to 246 (NRALDIFNTS). The chain crosses the membrane as a helical span at residues 247 to 267 (IVTPIYYVFFTTSVITCSAIL). Residues 268–278 (FKEWQDMPVDD) are Extracellular-facing. The helical transmembrane segment at 279–299 (VIGTLSGFFTIIVGIFLLHAF) threads the bilayer. At 300–360 (KDVSFSLSSL…SRRNGNLTAF (61 aa)) the chain is on the cytoplasmic side.

It belongs to the NIPA family.

The protein resides in the cell membrane. Its subcellular location is the early endosome. It catalyses the reaction Mg(2+)(in) = Mg(2+)(out). In terms of biological role, acts as a selective Mg(2+) transporter. This chain is Magnesium transporter NIPA2 (NIPA2), found in Bos taurus (Bovine).